The following is a 281-amino-acid chain: Microtubule-associated protein RP/EB family member 3 (281 aa).

Positions Asn14–Asp116 constitute a Calponin-homology (CH) domain. Disordered regions lie at residues Val157–Pro181 and Glu260–Tyr281. Polar residues predominate over residues Pro158 to Leu175. Phosphoserine is present on residues Ser162 and Ser176. An EB1 C-terminal domain is found at Gly194 to Pro264. The interval Asp217–Glu260 is APC-binding. Residues Asp217–Tyr281 are DCTN1-binding. The segment covering Glu272–Tyr281 has biased composition (basic and acidic residues).

The protein belongs to the MAPRE family. Homodimer. Heterodimer with MAPRE1. Binds monomeric and polymerized GTP-bound tubulin. Interacts with DCTN1 and SRCIN1. Binds to the C-terminal domain of APC. Interacts (via C-terminus) with CLIP1. Interacts with SLAIN2. Interacts with SLAIN1. Interacts with APC2. Interacts with AKAP9. Interacts with PDE4DIP isoform 2/MMG8/SMYLE; this interaction is required for its recruitment to the Golgi apparatus.

It is found in the cytoplasm. The protein resides in the cytoskeleton. In terms of biological role, plus-end tracking protein (+TIP) that binds to the plus-end of microtubules and regulates the dynamics of the microtubule cytoskeleton. Promotes microtubule growth. May be involved in spindle function by stabilizing microtubules and anchoring them at centrosomes. Also acts as a regulator of minus-end microtubule organization: interacts with the complex formed by AKAP9 and PDE4DIP, leading to recruit CAMSAP2 to the Golgi apparatus, thereby tethering non-centrosomal minus-end microtubules to the Golgi, an important step for polarized cell movement. Promotes elongation of CAMSAP2-decorated microtubule stretches on the minus-end of microtubules. The sequence is that of Microtubule-associated protein RP/EB family member 3 (Mapre3) from Mus musculus (Mouse).